A 559-amino-acid polypeptide reads, in one-letter code: Glutamine--tRNA ligase (559 aa).

A 'HIGH' region motif is present at residues 36-46 (PEPNGYLHLGH). ATP-binding positions include 37-39 (EPN) and 43-49 (HLGHAKS). The L-glutamine site is built by aspartate 69 and tyrosine 214. Residues threonine 233, 263 to 264 (RL), and 271 to 273 (LSK) each bind ATP. The 'KMSKS' region signature appears at 270–274 (LLSKR).

Belongs to the class-I aminoacyl-tRNA synthetase family. As to quaternary structure, monomer.

The protein localises to the cytoplasm. It carries out the reaction tRNA(Gln) + L-glutamine + ATP = L-glutaminyl-tRNA(Gln) + AMP + diphosphate. This is Glutamine--tRNA ligase from Nitrobacter winogradskyi (strain ATCC 25391 / DSM 10237 / CIP 104748 / NCIMB 11846 / Nb-255).